A 660-amino-acid chain; its full sequence is ATPase-like fidgetin (660 aa).

Disordered regions lie at residues 141-186 (KQIY…EDPF) and 209-334 (ALSS…ADSK). The span at 145–161 (SKHSPPSTSTSSIVSSS) shows a compositional bias: low complexity. Ser-177 bears the Phosphoserine mark. Positions 213-239 (DTGRSATMNSTTFPTAMKSQSTTKPTL) are enriched in polar residues. A compositionally biased stretch (low complexity) spans 240 to 255 (SNSVSSPSIQVSNNQN). A compositionally biased stretch (polar residues) spans 301-313 (LNSSHDTLGSSTR). Low complexity predominate over residues 314–333 (PSSADTAGSPATSPPATADS). 419-426 (GPPGTGKT) serves as a coordination point for ATP.

Belongs to the AAA ATPase family.

Its subcellular location is the nucleus. The sequence is that of ATPase-like fidgetin (alf1) from Schizosaccharomyces pombe (strain 972 / ATCC 24843) (Fission yeast).